The primary structure comprises 399 residues: Putative cytochrome P450 133B2 (399 aa).

Heme is bound at residue cysteine 348.

The protein belongs to the cytochrome P450 family. Heme is required as a cofactor.

The sequence is that of Putative cytochrome P450 133B2 (cyp133B2) from Xylella fastidiosa (strain Temecula1 / ATCC 700964).